The chain runs to 164 residues: Transcription elongation factor GreA (164 aa).

Residues 50–75 (YHAAREEQGQQEARIRQLQDLLNIAK) are a coiled coil.

It belongs to the GreA/GreB family.

Its function is as follows. Necessary for efficient RNA polymerase transcription elongation past template-encoded arresting sites. The arresting sites in DNA have the property of trapping a certain fraction of elongating RNA polymerases that pass through, resulting in locked ternary complexes. Cleavage of the nascent transcript by cleavage factors such as GreA or GreB allows the resumption of elongation from the new 3'terminus. GreA releases sequences of 2 to 3 nucleotides. This chain is Transcription elongation factor GreA, found in Mycobacterium leprae (strain Br4923).